Here is a 146-residue protein sequence, read N- to C-terminus: Large ribosomal subunit protein uL15 (146 aa).

Positions methionine 1–glycine 54 are disordered. Over residues arginine 23–isoleucine 37 the composition is skewed to gly residues.

It belongs to the universal ribosomal protein uL15 family. As to quaternary structure, part of the 50S ribosomal subunit.

In terms of biological role, binds to the 23S rRNA. The protein is Large ribosomal subunit protein uL15 of Acinetobacter baumannii (strain SDF).